A 674-amino-acid polypeptide reads, in one-letter code: Probable protein phosphatase 2C 66 (674 aa).

At S125 the chain carries Phosphoserine. Disordered stretches follow at residues 153 to 175 and 202 to 247; these read YSGPIESTKKTEKEKPKKIRKKP and KSVI…KQSM. Residues 244-665 form the PPM-type phosphatase domain; sequence KQSMNSVLDV…DDVSVIVISL (422 aa). Residues D282 and G283 each coordinate Mn(2+). Over residues 373–384 the composition is skewed to basic and acidic residues; it reads NNKTKSDNRCDQ. Positions 373-392 are disordered; the sequence is NNKTKSDNRCDQKGSNSTTT. The Mn(2+) site is built by D593 and D656.

It belongs to the PP2C family. Mg(2+) is required as a cofactor. It depends on Mn(2+) as a cofactor. In terms of tissue distribution, expressed at low level in seedlings, roots, leaves, stems, young inflorescences, flowers and siliques.

The protein localises to the nucleus. It catalyses the reaction O-phospho-L-seryl-[protein] + H2O = L-seryl-[protein] + phosphate. The catalysed reaction is O-phospho-L-threonyl-[protein] + H2O = L-threonyl-[protein] + phosphate. The protein is Probable protein phosphatase 2C 66 (PLL2) of Arabidopsis thaliana (Mouse-ear cress).